We begin with the raw amino-acid sequence, 1296 residues long: ABC transporter B family member 21 (1296 aa).

The tract at residues 1–59 (MDSVIESEEGLKVDSPNRADAETSNSKIHEEDEKELKTESDLKEEKKKTEKNKQEEDEK) is disordered. The segment covering 9 to 59 (EGLKVDSPNRADAETSNSKIHEEDEKELKTESDLKEEKKKTEKNKQEEDEK) has biased composition (basic and acidic residues). Residues 77–97 (IILMILGTIGAVGNGLGFPIM) traverse the membrane as a helical segment. Residues 80-368 (MILGTIGAVG…ASPCLSAFAA (289 aa)) enclose the ABC transmembrane type-1 1 domain. Residue N113 is glycosylated (N-linked (GlcNAc...) asparagine). The next 5 membrane-spanning stretches (helical) occupy residues 128 to 148 (FVYLGLGTLVAALLQVSGWMI), 205 to 225 (IQLVSTFIGGFVIAFTEGWLL), 227 to 247 (LVMVSSIPLLVMSGAALAIVI), 307 to 327 (GLGLGTLNIVIFCTYALAVWY), and 336 to 356 (GYTGGQVLIIIFAVLTGSMSL). The ABC transporter 1 domain occupies 403–639 (IELNNVNFSY…PEGAYSQLIR (237 aa)). A glycan (N-linked (GlcNAc...) asparagine) is linked at N409. 438–445 (GQSGSGKS) contacts ATP. N-linked (GlcNAc...) asparagine glycosylation is found at N505, N519, and N590. The span at 640-662 (LQEDTKQTEDSTDEQKLSMESMK) shows a compositional bias: basic and acidic residues. The interval 640–672 (LQEDTKQTEDSTDEQKLSMESMKRSSLRKSSLS) is disordered. Residues S657 and S660 each carry the phosphoserine modification. In terms of domain architecture, ABC transmembrane type-1 2 spans 730 to 1017 (LILGSIAAVL…SSSLSPDSSK (288 aa)). 2 helical membrane passes run 731–751 (ILGSIAAVLNGVILPIFGILI) and 774–794 (IIFMLLGVASMVVFPAQTIFF). N-linked (GlcNAc...) asparagine glycosylation occurs at N826. The next 3 membrane-spanning stretches (helical) occupy residues 865 to 885 (VIAFVASWQLAFIVLAMLPLI), 952 to 972 (GIVSGIGFGVSFFVLFSSYAA), and 986 to 1006 (TTFDSVFRVFFALTMAAVAIS). One can recognise an ABC transporter 2 domain in the interval 1052–1289 (IELRHISFKY…KDGVYASLVQ (238 aa)). 1087 to 1094 (GESGSGKS) contributes to the ATP binding site. Residues N1141 and N1240 are each glycosylated (N-linked (GlcNAc...) asparagine).

This sequence belongs to the ABC transporter superfamily. ABCB family. Multidrug resistance exporter (TC 3.A.1.201) subfamily.

The protein localises to the membrane. The protein is ABC transporter B family member 21 (ABCB21) of Arabidopsis thaliana (Mouse-ear cress).